We begin with the raw amino-acid sequence, 463 residues long: MTQSNNFATSPLWQQGSVVELTITGLNHQGEGIGRFNERVVFVPDTAPGDRLEVRLVKVKRNYALAQLLKILEPSVQRTRPSCIVADKCGGCQWQHLDYQFQVESKQQQIIDALERIGGFTTLPLEPLLQSPASLGYRNKATYPLSRSKTGQVQAGYYRKGSHRLVNINQCPVQDDRLNLLLTEVKKDIENRGWSIYDEEKKQGKLRHLSLRIGQRTGEMLLTLISAHKGLPDLEEQAGEWLERYPDLGGICLNIQPEPNNRIFGDETVVIAGRGICREKFADLSFSLGANTFFQVNSGAAELLLTRLQQALNLQGAELLVDAYAGVGTFTLPLARQVRQAIAIEVNQDSVHQGQRNAEINQIANVDFLAGTVETVLPTLSEIPDVLLLDPPRKGCAPEVLREIIRQRPEKIAYISCQPPTLARDLKFLCAEGFYGITWVQGCDFFPQTAHVECAVILKAVNG.

The TRAM domain maps to 12–70; sequence LWQQGSVVELTITGLNHQGEGIGRFNERVVFVPDTAPGDRLEVRLVKVKRNYALAQLLK. [4Fe-4S] cluster is bound by residues C83, C89, C92, and C171. Residues Q295, Y324, E345, and D390 each contribute to the S-adenosyl-L-methionine site. C417 acts as the Nucleophile in catalysis.

This sequence belongs to the class I-like SAM-binding methyltransferase superfamily. RNA M5U methyltransferase family.

This is an uncharacterized protein from Synechocystis sp. (strain ATCC 27184 / PCC 6803 / Kazusa).